We begin with the raw amino-acid sequence, 271 residues long: MDPGTDSAPLAGLVWSSASAPPPPGFSAITCTVEGGTASFGRGFAQKAGYFLCLSTLGIPENPQDNVVVDMQIVMDKGPLPSGFSAVNDPQDIKASVSKKKRMCVKLMPLGTADVVVSDVKLSGKTKTVPGYLRVGDIGGFAIWCKKSKAPRPVPKPRTLSQDMRGLSLDPPKEPSKGSHPERTLSRLGSRASTLRRTDSIYEASSLYGISAMDGVPFTLHPRFEGKSCGPLNLSAFGDLTIKSLADIEKEYNYGFVVEKTAAARLPPSVS.

The 143-residue stretch at 7-149 (SAPLAGLVWS…GFAIWCKKSK (143 aa)) folds into the MABP domain. The residue at position 128 (Thr-128) is a Phosphothreonine. The tract at residues 149–192 (KAPRPVPKPRTLSQDMRGLSLDPPKEPSKGSHPERTLSRLGSRA) is disordered. An SH3-binding motif is present at residues 153-158 (PVPKPR). Residues Ser-161 and Ser-168 each carry the phosphoserine modification. Basic and acidic residues predominate over residues 171–185 (PPKEPSKGSHPERTL). The interval 190-271 (SRASTLRRTD…AAARLPPSVS (82 aa)) is interaction with TSG101, VPS37B and VPS28. A phosphoserine mark is found at Ser-193 and Ser-200. Tyr-202 carries the post-translational modification Phosphotyrosine. Residue Ser-205 is modified to Phosphoserine. Residues 213–263 (MDGVPFTLHPRFEGKSCGPLNLSAFGDLTIKSLADIEKEYNYGFVVEKTAA) form the UMA domain.

The protein belongs to the MVB12 family. In terms of assembly, component of the ESCRT-I complex (endosomal sorting complex required for transport I) which consists of TSG101, VPS28, a VPS37 protein (VPS37A to -D) and MVB12A or MVB12B in a 1:1:1:1 stoichiometry. Interacts with CD2AP and CIN85/SH3KBP1. Interacts with CD2AP (via one of the SH3 domains). Interacts with TSG101; the association appears to be mediated by the TSG101-VPS37 binary subcomplex. Interacts with VPS28. Interacts with VPS37B; the association appears to be mediated by the TSG101-VPS37 binary subcomplex. Interacts with VPS37C; the association appears to be mediated by the TSG101-VPS37 binary subcomplex. Interacts with VPS37D; the association appears to be mediated by the TSG101-VPS37 binary subcomplex. Interacts with CEP55. In terms of processing, phosphorylated on Tyr-202 upon EGF stimulation. Phosphorylation is required for interaction with CD2AP and CIN85/SH3KBP1.

It localises to the cytoplasm. The protein resides in the cytoskeleton. It is found in the nucleus. Its subcellular location is the endosome. The protein localises to the microtubule organizing center. It localises to the centrosome. The protein resides in the late endosome membrane. Functionally, component of the ESCRT-I complex, a regulator of vesicular trafficking process. Required for the sorting of endocytic ubiquitinated cargos into multivesicular bodies. May be involved in the ligand-mediated internalization and down-regulation of EGF receptor. This chain is Multivesicular body subunit 12A (Mvb12a), found in Mus musculus (Mouse).